The primary structure comprises 346 residues: Protein SHI RELATED SEQUENCE 5 (346 aa).

The disordered stretch occupies residues 7–31 (LGGRDNNSNNNKQDHHQVDKDHHHQ). Positions 18 to 31 (KQDHHQVDKDHHHQ) are enriched in basic and acidic residues. Positions 125, 128, 136, 141, 145, and 152 each coordinate Zn(2+). The zn(2)-C6 fungal-type; degenerate DNA-binding region spans 125–152 (CQDCGNQAKKDCPHMRCRTCCKSRGFHC). Residues 175–186 (SLQHHSASSRET) are compositionally biased toward polar residues. The interval 175 to 215 (SLQHHSASSRETQNAKRLREASGGDNNDDKDHSGGGGSALA) is disordered. The segment covering 187–207 (QNAKRLREASGGDNNDDKDHS) has biased composition (basic and acidic residues). A Required for homo- and heterodimerization motif is present at residues 269–272 (IGGH).

This sequence belongs to the SHI protein family.

It localises to the nucleus. Its function is as follows. Transcription activator that binds DNA on 5'-ACTCTAC-3' and promotes auxin homeostasis-regulating gene expression (e.g. YUC genes), as well as genes affecting stamen development, cell expansion and timing of flowering. Synergistically with other SHI-related proteins, regulates gynoecium, stamen and leaf development in a dose-dependent manner, controlling apical-basal patterning. Promotes style and stigma formation, and influences vascular development during gynoecium development. May also have a role in the formation and/or maintenance of the shoot apical meristem (SAM). This chain is Protein SHI RELATED SEQUENCE 5 (SRS5), found in Arabidopsis thaliana (Mouse-ear cress).